A 403-amino-acid chain; its full sequence is Heparan-sulfate 6-O-sulfotransferase 2 (403 aa).

The Cytoplasmic portion of the chain corresponds to 1-7 (MEDRSHK). A helical; Signal-anchor for type II membrane protein membrane pass occupies residues 8–28 (VLLALVMLFLFAVIVLQYVCP). The Lumenal segment spans residues 29 to 403 (GTECQLLRLR…DYLGNVERWR (375 aa)). An N-linked (GlcNAc...) asparagine glycan is attached at Asn64. 88–96 (HIQKTGGTT) is a 3'-phosphoadenylyl sulfate binding site. Residues 118 to 119 (KK), Arg135, Trp140, and His145 each bind substrate. His145 serves as the catalytic Proton acceptor. 3'-phosphoadenylyl sulfate-binding residues include Arg180 and Ser188. His192 and Trp199 together coordinate substrate. An N-linked (GlcNAc...) asparagine glycan is attached at Asn259. Position 312–314 (312–314 (TQY)) interacts with 3'-phosphoadenylyl sulfate. Asn315 carries N-linked (GlcNAc...) asparagine glycosylation. 318–319 (RA) is a binding site for 3'-phosphoadenylyl sulfate. Positions 381–403 (AHLREQGENSSSTDYLGNVERWR) are disordered. N-linked (GlcNAc...) asparagine glycosylation is present at Asn389.

It belongs to the sulfotransferase 6 family.

It is found in the membrane. It catalyses the reaction alpha-D-glucosaminyl-[heparan sulfate](n) + 3'-phosphoadenylyl sulfate = 6-sulfo-alpha-D-glucosaminyl-[heparan sulfate](n) + adenosine 3',5'-bisphosphate + H(+). In terms of biological role, 6-O-sulfation enzyme which catalyzes the transfer of sulfate from 3'-phosphoadenosine 5'-phosphosulfate (PAPS) to position 6 of the N-sulfoglucosamine residue (GlcNS) of heparan sulfate. May also play a role in limb development. This Gallus gallus (Chicken) protein is Heparan-sulfate 6-O-sulfotransferase 2 (HS6ST2).